The sequence spans 313 residues: D-alanine--D-alanine ligase (313 aa).

Positions 108–308 (KLVWQQTGVP…YSELVVKVLA (201 aa)) constitute an ATP-grasp domain. 138–193 (VAKLGLPLFVKPASEGSSVAVLKVKTADALPAALSEAATHDKIVIVEKSIEGGGEY) contacts ATP. Positions 262, 275, and 277 each coordinate Mg(2+).

The protein belongs to the D-alanine--D-alanine ligase family. The cofactor is Mg(2+). Mn(2+) serves as cofactor.

The protein resides in the cytoplasm. The enzyme catalyses 2 D-alanine + ATP = D-alanyl-D-alanine + ADP + phosphate + H(+). The protein operates within cell wall biogenesis; peptidoglycan biosynthesis. Its function is as follows. Cell wall formation. In Burkholderia ambifaria (strain ATCC BAA-244 / DSM 16087 / CCUG 44356 / LMG 19182 / AMMD) (Burkholderia cepacia (strain AMMD)), this protein is D-alanine--D-alanine ligase.